We begin with the raw amino-acid sequence, 561 residues long: Putative cuticle collagen 145 (561 aa).

An N-terminal signal peptide occupies residues 1–30 (MEKILVTLSTGAASIAVLAVLFTIPSLYNT). Positions 100 to 112 (TCPPGPPGPPGQP) are enriched in pro residues. Disordered regions lie at residues 100-134 (TCPPGPPGPPGQPGQPGTPGAPGPKGEDNTSTYAP), 148-271 (PQGP…PGGP), 367-398 (TCPPGPPGPPGQPGQPGTPGAPGPKGEDNTAT), and 422-540 (TGPA…GPGL). Triple-helical region regions lie at residues 102–127 (PPGPPGPPGQPGQPGTPGAPGPKGED) and 153–276 (GPEG…LPGN). 2 stretches are compositionally biased toward low complexity: residues 164–209 (AGPD…PGQD) and 219–265 (APGA…DGQP). A compositionally biased stretch (pro residues) spans 367-379 (TCPPGPPGPPGQP). A triple-helical region region spans residues 413–544 (KCPQGPAGPT…PGGPGLPGND (132 aa)). Low complexity-rich tracts occupy residues 422–467 (TGPA…PGQD) and 486–532 (APGA…DGQP). The Collagen-like domain occupies 485-543 (GAPGAPGNAGPAGPAGQDGFPGQDGQPGPAGPAGQDGFPGNAGSDGQPGAPGGPGLPGN).

Belongs to the cuticular collagen family. Collagen polypeptide chains are complexed within the cuticle by disulfide bonds and other types of covalent cross-links.

Nematode cuticles are composed largely of collagen-like proteins. The cuticle functions both as an exoskeleton and as a barrier to protect the worm from its environment. The protein is Putative cuticle collagen 145 of Caenorhabditis briggsae.